The primary structure comprises 44 residues: Cytochrome b559 subunit beta (44 aa).

Residues 19-35 (WLSIHALAVPTIFFLGS) form a helical membrane-spanning segment. H23 provides a ligand contact to heme.

The protein belongs to the PsbE/PsbF family. As to quaternary structure, heterodimer of an alpha subunit and a beta subunit. PSII is composed of 1 copy each of membrane proteins PsbA, PsbB, PsbC, PsbD, PsbE, PsbF, PsbH, PsbI, PsbJ, PsbK, PsbL, PsbM, PsbT, PsbX, PsbY, PsbZ, Psb30/Ycf12, at least 3 peripheral proteins of the oxygen-evolving complex and a large number of cofactors. It forms dimeric complexes. Heme b serves as cofactor.

The protein resides in the plastid. The protein localises to the chloroplast thylakoid membrane. This b-type cytochrome is tightly associated with the reaction center of photosystem II (PSII). PSII is a light-driven water:plastoquinone oxidoreductase that uses light energy to abstract electrons from H(2)O, generating O(2) and a proton gradient subsequently used for ATP formation. It consists of a core antenna complex that captures photons, and an electron transfer chain that converts photonic excitation into a charge separation. In Tetradesmus obliquus (Green alga), this protein is Cytochrome b559 subunit beta.